The following is a 277-amino-acid chain: Ribonuclease HII (277 aa).

An RNase H type-2 domain is found at K20–D250. A divalent metal cation-binding residues include D26, E27, and D141.

Belongs to the RNase HII family. It depends on Mn(2+) as a cofactor. Requires Mg(2+) as cofactor.

It localises to the cytoplasm. The catalysed reaction is Endonucleolytic cleavage to 5'-phosphomonoester.. Its function is as follows. Endonuclease that specifically degrades the RNA of RNA-DNA hybrids. The chain is Ribonuclease HII from Methanococcus aeolicus (strain ATCC BAA-1280 / DSM 17508 / OCM 812 / Nankai-3).